Here is a 598-residue protein sequence, read N- to C-terminus: Transcription factor dpl-1 (598 aa).

Disordered regions lie at residues Met-1–Leu-73, Asn-435–Gly-457, and Thr-573–Gln-598. Residues Pro-13–Leu-22 are compositionally biased toward polar residues. Gly residues predominate over residues Gly-55–Gly-64.

This sequence belongs to the E2F/DP family. In terms of assembly, component of the DRM complex, at least composed of lin-9, lin-35, lin-37, lin-52, lin-53, lin-54- dpl-1 and efl-1. Interacts (via N-terminus) with efl-1. Interacts (via C-terminus) with lin-35 (via C-terminus).

It is found in the nucleus. Its function is as follows. Synthetic multivulva class B (synMuvB) protein. SynMuvB proteins are required to repress the induction of vulval development by Ras signaling and probably act by forming the multiprotein DRM complex that represses transcription. May also negatively regulate vulval development in association with other SynMuv class B proteins such as lin-15A. Can stimulate E2F-dependent transcription. Plays a role in negatively regulating the progression through the G1 phase of the cell cycle during postembryonic development, most likely by acting as a transcriptional repressor in association with the cell cycle regulatory factor efl-1 and the transcriptional repressor lin-35, but may also act as a positive regulator of cell cycle entry. Involved in the regulation of intestinal cell division during postembryonic development, most likely in complex with efl-1 and lin-35. Promotes germ cell programmed cell death, probably together with efl-1, by positively regulating the expression of the apoptosis proteins ced-3 and ced-4. In particular, positively regulates the expression of ced-4 in response to starvation. Its role in programmed cell death may be in conjunction with cell cycle regulatory factor efl-1 and the synthetic multivulva class B proteins lin-35, lin-37 and lin-52, and is independent of the ced-1, ced-8 and ced-9 pathways. In Caenorhabditis elegans, this protein is Transcription factor dpl-1.